Here is a 160-residue protein sequence, read N- to C-terminus: Phosphopantetheine adenylyltransferase (160 aa).

Threonine 11 is a substrate binding site. ATP is bound by residues 11-12 (TF) and histidine 19. Substrate-binding residues include lysine 43, threonine 75, and arginine 89. Residues 90–92 (GLR), glutamate 100, and 125–131 (YSFLSSS) contribute to the ATP site.

Belongs to the bacterial CoaD family. In terms of assembly, homohexamer. Mg(2+) serves as cofactor.

Its subcellular location is the cytoplasm. It carries out the reaction (R)-4'-phosphopantetheine + ATP + H(+) = 3'-dephospho-CoA + diphosphate. The protein operates within cofactor biosynthesis; coenzyme A biosynthesis; CoA from (R)-pantothenate: step 4/5. Functionally, reversibly transfers an adenylyl group from ATP to 4'-phosphopantetheine, yielding dephospho-CoA (dPCoA) and pyrophosphate. The polypeptide is Phosphopantetheine adenylyltransferase (Listeria monocytogenes serovar 1/2a (strain ATCC BAA-679 / EGD-e)).